The sequence spans 1141 residues: IgM protease (1141 aa).

Positions 1 to 32 (MNIQERFSLRKSAVGLVSVSLLCAIYTSTVAA) are cleaved as a signal peptide. Cys195 serves as the catalytic Nucleophile. Disordered regions lie at residues 518-544 (PDLP…STNL), 725-749 (EKDS…NVET), 781-805 (LEKD…TNVE), and 839-860 (EKDS…ESTS). Over residues 526 to 544 (STVSDVDSLSSQETSSTNL) the composition is skewed to polar residues. 2 stretches are compositionally biased toward low complexity: residues 738 to 749 (EPTSSESTNVET) and 795 to 805 (EPTSSESTNVE). A helical transmembrane segment spans residues 1119 to 1136 (IMGVGLLTLVLGSALGLL).

The protein belongs to the peptidase C66 family.

Its subcellular location is the cell membrane. It localises to the secreted. With respect to regulation, igM cleavage is inhibited by iodoacetamide but not by AEBSF, bestatin, E-64, Z-LVG-CHN(2), or EDTA. Functionally, catalyzes the specific cleavage of porcine IgM bound to the bacterial surface. Can degrade only IgM but neither IgG nor IgA, and is host specific, as it exclusively cleaves porcine IgM but not IgM from six other species, including human, mouse and a closely related member of the Suidae family. Promotes survival in porcine blood. Is thus involved in a so-far-unknown mechanism of host-pathogen interaction at an early stage of the host immune response. This chain is IgM protease (ide), found in Streptococcus suis (strain P1/7).